We begin with the raw amino-acid sequence, 914 residues long: Valine--tRNA ligase (914 aa).

Positions 47–57 (PYPTGELHMGH) match the 'HIGH' region motif. A 'KMSKS' region motif is present at residues 552–556 (KMSKS). K555 contacts ATP.

The protein belongs to the class-I aminoacyl-tRNA synthetase family. ValS type 2 subfamily.

The protein localises to the cytoplasm. It catalyses the reaction tRNA(Val) + L-valine + ATP = L-valyl-tRNA(Val) + AMP + diphosphate. Functionally, catalyzes the attachment of valine to tRNA(Val). As ValRS can inadvertently accommodate and process structurally similar amino acids such as threonine, to avoid such errors, it has a 'posttransfer' editing activity that hydrolyzes mischarged Thr-tRNA(Val) in a tRNA-dependent manner. The protein is Valine--tRNA ligase of Methanopyrus kandleri (strain AV19 / DSM 6324 / JCM 9639 / NBRC 100938).